Consider the following 1024-residue polypeptide: Error-prone DNA polymerase (1024 aa).

Belongs to the DNA polymerase type-C family. DnaE2 subfamily.

It is found in the cytoplasm. The enzyme catalyses DNA(n) + a 2'-deoxyribonucleoside 5'-triphosphate = DNA(n+1) + diphosphate. In terms of biological role, DNA polymerase involved in damage-induced mutagenesis and translesion synthesis (TLS). It is not the major replicative DNA polymerase. This is Error-prone DNA polymerase from Vibrio parahaemolyticus serotype O3:K6 (strain RIMD 2210633).